Here is a 159-residue protein sequence, read N- to C-terminus: Ribosomal RNA large subunit methyltransferase H (159 aa).

S-adenosyl-L-methionine contacts are provided by residues L76, G108, and 127–132 (FSKMTF).

This sequence belongs to the RNA methyltransferase RlmH family. In terms of assembly, homodimer.

The protein resides in the cytoplasm. The catalysed reaction is pseudouridine(1915) in 23S rRNA + S-adenosyl-L-methionine = N(3)-methylpseudouridine(1915) in 23S rRNA + S-adenosyl-L-homocysteine + H(+). Its function is as follows. Specifically methylates the pseudouridine at position 1915 (m3Psi1915) in 23S rRNA. The sequence is that of Ribosomal RNA large subunit methyltransferase H from Exiguobacterium sibiricum (strain DSM 17290 / CCUG 55495 / CIP 109462 / JCM 13490 / 255-15).